The primary structure comprises 378 residues: Mannitol-1-phosphate 5-dehydrogenase (378 aa).

4–15 provides a ligand contact to NAD(+); that stretch reads SVHFGAGNIGRG.

It belongs to the mannitol dehydrogenase family.

The enzyme catalyses D-mannitol 1-phosphate + NAD(+) = beta-D-fructose 6-phosphate + NADH + H(+). This chain is Mannitol-1-phosphate 5-dehydrogenase, found in Streptococcus pneumoniae (strain ATCC 700669 / Spain 23F-1).